The sequence spans 62 residues: UPF0291 protein CLM_2971 (62 aa).

This sequence belongs to the UPF0291 family.

It is found in the cytoplasm. This Clostridium botulinum (strain Kyoto / Type A2) protein is UPF0291 protein CLM_2971.